A 210-amino-acid chain; its full sequence is Small ribosomal subunit protein uS5 (210 aa).

The segment covering 1–11 (MTQPNTQTTPN) has biased composition (polar residues). The segment at 1–56 (MTQPNTQTTPNDVPAAAEGQHQEQQQQQRRGGGRERRGGGRRGDRRGQERDSEWQE) is disordered. Positions 18–29 (EGQHQEQQQQQR) are enriched in low complexity. The segment covering 32–56 (GGRERRGGGRRGDRRGQERDSEWQE) has biased composition (basic and acidic residues). Residues 54 to 117 (WQERVVQIRR…ADGKKHLVKV (64 aa)) enclose the S5 DRBM domain.

This sequence belongs to the universal ribosomal protein uS5 family. In terms of assembly, part of the 30S ribosomal subunit. Contacts proteins S4 and S8.

In terms of biological role, with S4 and S12 plays an important role in translational accuracy. Its function is as follows. Located at the back of the 30S subunit body where it stabilizes the conformation of the head with respect to the body. The polypeptide is Small ribosomal subunit protein uS5 (Prochlorococcus marinus (strain MIT 9303)).